Consider the following 131-residue polypeptide: MVKNSTSIRTRKRVKKQILDGIAHIHASFNNTIVTITDRQGNALGWATSGGSGFRGSRKSTPFAAQVAAERCAEIVKDYGIKNLEVMVKGPGPGRESTIRALNAAGFRITNITDVTPIPHNGCRPPKKRRV.

It belongs to the universal ribosomal protein uS11 family. In terms of assembly, part of the 30S ribosomal subunit. Interacts with proteins S7 and S18. Binds to IF-3.

Functionally, located on the platform of the 30S subunit, it bridges several disparate RNA helices of the 16S rRNA. Forms part of the Shine-Dalgarno cleft in the 70S ribosome. The polypeptide is Small ribosomal subunit protein uS11 (Buchnera aphidicola subsp. Acyrthosiphon pisum (strain 5A)).